Here is a 346-residue protein sequence, read N- to C-terminus: Holliday junction branch migration complex subunit RuvB (346 aa).

Residues 2 to 183 (TDDRIIGAGA…FGIVQRLEFY (182 aa)) are large ATPase domain (RuvB-L). Residues I22, R23, G64, K67, T68, T69, 130–132 (EDF), R173, Y183, and R220 contribute to the ATP site. T68 provides a ligand contact to Mg(2+). The segment at 184–254 (SVEELTRIVR…VAQAAMKMLK (71 aa)) is small ATPAse domain (RuvB-S). A head domain (RuvB-H) region spans residues 257–346 (PEGFDELDRR…DLFAEVPDVG (90 aa)). 3 residues coordinate DNA: R293, R312, and R317.

This sequence belongs to the RuvB family. In terms of assembly, homohexamer. Forms an RuvA(8)-RuvB(12)-Holliday junction (HJ) complex. HJ DNA is sandwiched between 2 RuvA tetramers; dsDNA enters through RuvA and exits via RuvB. An RuvB hexamer assembles on each DNA strand where it exits the tetramer. Each RuvB hexamer is contacted by two RuvA subunits (via domain III) on 2 adjacent RuvB subunits; this complex drives branch migration. In the full resolvosome a probable DNA-RuvA(4)-RuvB(12)-RuvC(2) complex forms which resolves the HJ.

It is found in the cytoplasm. The enzyme catalyses ATP + H2O = ADP + phosphate + H(+). In terms of biological role, the RuvA-RuvB-RuvC complex processes Holliday junction (HJ) DNA during genetic recombination and DNA repair, while the RuvA-RuvB complex plays an important role in the rescue of blocked DNA replication forks via replication fork reversal (RFR). RuvA specifically binds to HJ cruciform DNA, conferring on it an open structure. The RuvB hexamer acts as an ATP-dependent pump, pulling dsDNA into and through the RuvAB complex. RuvB forms 2 homohexamers on either side of HJ DNA bound by 1 or 2 RuvA tetramers; 4 subunits per hexamer contact DNA at a time. Coordinated motions by a converter formed by DNA-disengaged RuvB subunits stimulates ATP hydrolysis and nucleotide exchange. Immobilization of the converter enables RuvB to convert the ATP-contained energy into a lever motion, pulling 2 nucleotides of DNA out of the RuvA tetramer per ATP hydrolyzed, thus driving DNA branch migration. The RuvB motors rotate together with the DNA substrate, which together with the progressing nucleotide cycle form the mechanistic basis for DNA recombination by continuous HJ branch migration. Branch migration allows RuvC to scan DNA until it finds its consensus sequence, where it cleaves and resolves cruciform DNA. The polypeptide is Holliday junction branch migration complex subunit RuvB (Stenotrophomonas maltophilia (strain K279a)).